Consider the following 293-residue polypeptide: tRNA-cytidine(32) 2-sulfurtransferase (293 aa).

A PP-loop motif motif is present at residues 62–67; sequence SGGKDS. [4Fe-4S] cluster-binding residues include Cys137, Cys140, and Cys228.

It belongs to the TtcA family. As to quaternary structure, homodimer. The cofactor is Mg(2+). [4Fe-4S] cluster is required as a cofactor.

Its subcellular location is the cytoplasm. It catalyses the reaction cytidine(32) in tRNA + S-sulfanyl-L-cysteinyl-[cysteine desulfurase] + AH2 + ATP = 2-thiocytidine(32) in tRNA + L-cysteinyl-[cysteine desulfurase] + A + AMP + diphosphate + H(+). It participates in tRNA modification. Functionally, catalyzes the ATP-dependent 2-thiolation of cytidine in position 32 of tRNA, to form 2-thiocytidine (s(2)C32). The sulfur atoms are provided by the cysteine/cysteine desulfurase (IscS) system. The chain is tRNA-cytidine(32) 2-sulfurtransferase from Brucella melitensis biotype 1 (strain ATCC 23456 / CCUG 17765 / NCTC 10094 / 16M).